The primary structure comprises 394 residues: Elongation factor Tu 1 (394 aa).

Residues 10–204 (KPHVNVGTIG…FLDSYIPEPE (195 aa)) enclose the tr-type G domain. The G1 stretch occupies residues 19–26 (GHVDHGKT). 19–26 (GHVDHGKT) is a binding site for GTP. T26 is a binding site for Mg(2+). Residues 60 to 64 (GITIN) form a G2 region. A G3 region spans residues 81-84 (DCPG). Residues 81-85 (DCPGH) and 136-139 (NKCD) each bind GTP. The tract at residues 136 to 139 (NKCD) is G4. Residues 174-176 (SAL) form a G5 region.

The protein belongs to the TRAFAC class translation factor GTPase superfamily. Classic translation factor GTPase family. EF-Tu/EF-1A subfamily. As to quaternary structure, monomer.

Its subcellular location is the cytoplasm. It catalyses the reaction GTP + H2O = GDP + phosphate + H(+). In terms of biological role, GTP hydrolase that promotes the GTP-dependent binding of aminoacyl-tRNA to the A-site of ribosomes during protein biosynthesis. In Shigella sonnei (strain Ss046), this protein is Elongation factor Tu 1.